We begin with the raw amino-acid sequence, 586 residues long: MAPISIADIVAALPAEDTWGPATASDNMLQGVPYAPFSKGDKLGRMADWTAESKDPNRAGRQAYNRNYRDQQVYGAGSSSLFAVQVAEDESSFSVVDNTRSSAKRTFGRGGGTVFRGRAQRGGAQRGGRAGFQRVGAGRGQGGDRYYDNRSGGRGNRGRRFGWKDYDKPQRTREPSVNVRPDWNMLEEVDFSRLSKLNLEAPEGEDVDSYGFLYHYDRSYDKAPVKNAERRLQSLDRAAYNVTTTQDPVIQELAEKNEATIFATSDILSMLMCAPRSVYSWDIVIVHQGNKIYFDKREGASLDLVTVNENAADAPLELADSANKQDAINTPSALAMEATFINHNFALQTVVESEDSKVSLAHPNPFYNAAEETEPLASKAYKYRRFDLSLERDDEPVNMIVRTEVDAIMKNPVNGEDQQLLVKALNEFDSKAQGSGGALDWRSKLWSQRGAVVATEMKNNSVKLARWTTQAILAKADGMKLGFVSRANPRSAAGHVVLGVVGYKPRDLAAQMNLNLGNGWGIVRTIVDRIRALDADEDEDKVTKYVLIKDPNRPVLRLYSVPATTFEEEEEVAAEEQEAAEEEAEE.

Residues 102 to 176 (SAKRTFGRGG…DKPQRTREPS (75 aa)) form a disordered region. Residues 162 to 174 (GWKDYDKPQRTRE) are compositionally biased toward basic and acidic residues. The RNA gate stretch occupies residues 301–315 (SLDLVTVNENAADAP). The disordered stretch occupies residues 567–586 (EEEEEVAAEEQEAAEEEAEE).

It belongs to the eIF-3 subunit D family. In terms of assembly, component of the eukaryotic translation initiation factor 3 (eIF-3) complex.

The protein resides in the cytoplasm. MRNA cap-binding component of the eukaryotic translation initiation factor 3 (eIF-3) complex, which is involved in protein synthesis of a specialized repertoire of mRNAs and, together with other initiation factors, stimulates binding of mRNA and methionyl-tRNAi to the 40S ribosome. The eIF-3 complex specifically targets and initiates translation of a subset of mRNAs involved in cell proliferation. In the eIF-3 complex, eif3d specifically recognizes and binds the 7-methylguanosine cap of a subset of mRNAs. This Aspergillus niger (strain ATCC MYA-4892 / CBS 513.88 / FGSC A1513) protein is Eukaryotic translation initiation factor 3 subunit D.